A 108-amino-acid polypeptide reads, in one-letter code: Pyrimidine/purine nucleoside phosphorylase (108 aa).

This sequence belongs to the nucleoside phosphorylase PpnP family.

It catalyses the reaction a purine D-ribonucleoside + phosphate = a purine nucleobase + alpha-D-ribose 1-phosphate. The catalysed reaction is adenosine + phosphate = alpha-D-ribose 1-phosphate + adenine. The enzyme catalyses cytidine + phosphate = cytosine + alpha-D-ribose 1-phosphate. It carries out the reaction guanosine + phosphate = alpha-D-ribose 1-phosphate + guanine. It catalyses the reaction inosine + phosphate = alpha-D-ribose 1-phosphate + hypoxanthine. The catalysed reaction is thymidine + phosphate = 2-deoxy-alpha-D-ribose 1-phosphate + thymine. The enzyme catalyses uridine + phosphate = alpha-D-ribose 1-phosphate + uracil. It carries out the reaction xanthosine + phosphate = alpha-D-ribose 1-phosphate + xanthine. Catalyzes the phosphorolysis of diverse nucleosides, yielding D-ribose 1-phosphate and the respective free bases. Can use uridine, adenosine, guanosine, cytidine, thymidine, inosine and xanthosine as substrates. Also catalyzes the reverse reactions. The sequence is that of Pyrimidine/purine nucleoside phosphorylase from Acinetobacter baylyi (strain ATCC 33305 / BD413 / ADP1).